The following is a 236-amino-acid chain: UPF0257 lipoprotein YnfC (236 aa).

An N-terminal signal peptide occupies residues 1-16 (MKYKLLPCLLAIFLTG). Residue C17 is the site of N-palmitoyl cysteine attachment. C17 carries the S-diacylglycerol cysteine lipid modification.

This sequence belongs to the UPF0257 family.

The protein resides in the cell membrane. The polypeptide is UPF0257 lipoprotein YnfC (Escherichia coli O7:K1 (strain IAI39 / ExPEC)).